Consider the following 420-residue polypeptide: Gamma-glutamyl phosphate reductase (420 aa).

This sequence belongs to the gamma-glutamyl phosphate reductase family.

Its subcellular location is the cytoplasm. The enzyme catalyses L-glutamate 5-semialdehyde + phosphate + NADP(+) = L-glutamyl 5-phosphate + NADPH + H(+). It participates in amino-acid biosynthesis; L-proline biosynthesis; L-glutamate 5-semialdehyde from L-glutamate: step 2/2. In terms of biological role, catalyzes the NADPH-dependent reduction of L-glutamate 5-phosphate into L-glutamate 5-semialdehyde and phosphate. The product spontaneously undergoes cyclization to form 1-pyrroline-5-carboxylate. This chain is Gamma-glutamyl phosphate reductase, found in Neisseria meningitidis serogroup C / serotype 2a (strain ATCC 700532 / DSM 15464 / FAM18).